We begin with the raw amino-acid sequence, 135 residues long: uncharacterized protein (135 aa).

Residues 100–125 (KESPATSSEDISSCSDCDSERLQSDD) are disordered. The span at 106–115 (SSEDISSCSD) shows a compositional bias: low complexity.

This is an uncharacterized protein from Microplitis demolitor (Parasitoid wasp).